Reading from the N-terminus, the 171-residue chain is Putative phosphoesterase BH1439 (171 aa).

The active-site Proton donor is H34. Short sequence motifs (HXTX) lie at residues 34–37 and 115–118; these read HVTL and HLTI. H115 (proton acceptor) is an active-site residue.

It belongs to the 2H phosphoesterase superfamily. YjcG family.

This is Putative phosphoesterase BH1439 from Halalkalibacterium halodurans (strain ATCC BAA-125 / DSM 18197 / FERM 7344 / JCM 9153 / C-125) (Bacillus halodurans).